Here is a 151-residue protein sequence, read N- to C-terminus: Regulatory protein RecX (151 aa).

This sequence belongs to the RecX family.

The protein localises to the cytoplasm. Functionally, modulates RecA activity. In Haemophilus ducreyi (strain 35000HP / ATCC 700724), this protein is Regulatory protein RecX.